We begin with the raw amino-acid sequence, 479 residues long: Bifunctional protein HldE (479 aa).

A ribokinase region spans residues methionine 1–threonine 322. ATP is bound at residue asparagine 198 to glutamate 201. Aspartate 267 is an active-site residue. The segment at phenylalanine 347–serine 479 is cytidylyltransferase.

It in the N-terminal section; belongs to the carbohydrate kinase PfkB family. In the C-terminal section; belongs to the cytidylyltransferase family. In terms of assembly, homodimer.

It catalyses the reaction D-glycero-beta-D-manno-heptose 7-phosphate + ATP = D-glycero-beta-D-manno-heptose 1,7-bisphosphate + ADP + H(+). The catalysed reaction is D-glycero-beta-D-manno-heptose 1-phosphate + ATP + H(+) = ADP-D-glycero-beta-D-manno-heptose + diphosphate. It functions in the pathway nucleotide-sugar biosynthesis; ADP-L-glycero-beta-D-manno-heptose biosynthesis; ADP-L-glycero-beta-D-manno-heptose from D-glycero-beta-D-manno-heptose 7-phosphate: step 1/4. It participates in nucleotide-sugar biosynthesis; ADP-L-glycero-beta-D-manno-heptose biosynthesis; ADP-L-glycero-beta-D-manno-heptose from D-glycero-beta-D-manno-heptose 7-phosphate: step 3/4. Functionally, catalyzes the phosphorylation of D-glycero-D-manno-heptose 7-phosphate at the C-1 position to selectively form D-glycero-beta-D-manno-heptose-1,7-bisphosphate. Catalyzes the ADP transfer from ATP to D-glycero-beta-D-manno-heptose 1-phosphate, yielding ADP-D-glycero-beta-D-manno-heptose. The sequence is that of Bifunctional protein HldE from Gluconobacter oxydans (strain 621H) (Gluconobacter suboxydans).